Here is a 462-residue protein sequence, read N- to C-terminus: tRNA-2-methylthio-N(6)-dimethylallyladenosine synthase (462 aa).

The region spanning 1–116 (MKLFIQTLGC…ITQVLERPKA (116 aa)) is the MTTase N-terminal domain. The [4Fe-4S] cluster site is built by Cys10, Cys47, Cys79, Cys148, Cys152, and Cys155. Residues 134–370 (QGMGIKAHLN…NLHKEILSKK (237 aa)) enclose the Radical SAM core domain. Residues 372–436 (QLEIGRIHNV…GGGLMGRFIN (65 aa)) form the TRAM domain.

This sequence belongs to the methylthiotransferase family. MiaB subfamily. Monomer. [4Fe-4S] cluster serves as cofactor.

The protein localises to the cytoplasm. The catalysed reaction is N(6)-dimethylallyladenosine(37) in tRNA + (sulfur carrier)-SH + AH2 + 2 S-adenosyl-L-methionine = 2-methylsulfanyl-N(6)-dimethylallyladenosine(37) in tRNA + (sulfur carrier)-H + 5'-deoxyadenosine + L-methionine + A + S-adenosyl-L-homocysteine + 2 H(+). Catalyzes the methylthiolation of N6-(dimethylallyl)adenosine (i(6)A), leading to the formation of 2-methylthio-N6-(dimethylallyl)adenosine (ms(2)i(6)A) at position 37 in tRNAs that read codons beginning with uridine. In Helicobacter hepaticus (strain ATCC 51449 / 3B1), this protein is tRNA-2-methylthio-N(6)-dimethylallyladenosine synthase.